The chain runs to 202 residues: Holliday junction branch migration complex subunit RuvA (202 aa).

The tract at residues 1-62 (MYEYLHGLIT…DTAQTLYGFS (62 aa)) is domain I. The segment at 63-141 (DFAEKQLFLK…DLAPATDDNT (79 aa)) is domain II. The tract at residues 142–151 (LFTPEVAPTT) is flexible linker. The domain III stretch occupies residues 152-202 (TENPQLADALAALTALGYRETAVKKITAQLRQFNGQTTNDYLSEGLRLLTK).

This sequence belongs to the RuvA family. Homotetramer. Forms an RuvA(8)-RuvB(12)-Holliday junction (HJ) complex. HJ DNA is sandwiched between 2 RuvA tetramers; dsDNA enters through RuvA and exits via RuvB. An RuvB hexamer assembles on each DNA strand where it exits the tetramer. Each RuvB hexamer is contacted by two RuvA subunits (via domain III) on 2 adjacent RuvB subunits; this complex drives branch migration. In the full resolvosome a probable DNA-RuvA(4)-RuvB(12)-RuvC(2) complex forms which resolves the HJ.

It is found in the cytoplasm. The RuvA-RuvB-RuvC complex processes Holliday junction (HJ) DNA during genetic recombination and DNA repair, while the RuvA-RuvB complex plays an important role in the rescue of blocked DNA replication forks via replication fork reversal (RFR). RuvA specifically binds to HJ cruciform DNA, conferring on it an open structure. The RuvB hexamer acts as an ATP-dependent pump, pulling dsDNA into and through the RuvAB complex. HJ branch migration allows RuvC to scan DNA until it finds its consensus sequence, where it cleaves and resolves the cruciform DNA. The chain is Holliday junction branch migration complex subunit RuvA from Levilactobacillus brevis (strain ATCC 367 / BCRC 12310 / CIP 105137 / JCM 1170 / LMG 11437 / NCIMB 947 / NCTC 947) (Lactobacillus brevis).